Consider the following 1040-residue polypeptide: DNA cross-link repair 1A protein (1040 aa).

The segment at 1 to 190 (MLEDISEEDI…RAGDHPFSSP (190 aa)) is nuclear localization region. A disordered region spans residues 15–76 (SKRKPKRVDP…LGNAGCQTSV (62 aa)). Positions 53–65 (RAAEAKEVKDHEV) are enriched in basic and acidic residues. A UBZ4-type zinc finger spans residues 119-149 (DGYCPNCQMPFSSLIGQTPRWHVFECLDSPP). Zn(2+) contacts are provided by C122, C125, H140, and C144. Glycyl lysine isopeptide (Lys-Gly) (interchain with G-Cter in SUMO2) cross-links involve residues K202, K236, K269, K353, K361, K429, K488, K508, K517, K533, and K536. Positions 396 to 614 (LPYDLACTGG…KSLSDLEFDA (219 aa)) are nuclear focus formation. 2 disordered regions span residues 582-602 (GINLNPVPSPNQKRSSQCKRK) and 623-651 (SVELSSERSQRQKKRCRKSNSLQEGACQK). The residue at position 590 (S590) is a Phosphoserine. Glycyl lysine isopeptide (Lys-Gly) (interchain with G-Cter in SUMO2) cross-links involve residues K668, K670, and K674.

It belongs to the DNA repair metallo-beta-lactamase (DRMBL) family. As to quaternary structure, binds constitutively to TP53BP1. Binds CDC27, which is itself a component of the anaphase promoting complex (APC). Binds PIAS1. As to expression, expressed in brain, heart, kidney, liver, pancreas, placenta and skeletal muscle.

It localises to the nucleus. The enzyme catalyses a beta-lactam + H2O = a substituted beta-amino acid. Beta-lactamase activity is inhibited by sulbactam. Its function is as follows. May be required for DNA interstrand cross-link repair. Also required for checkpoint mediated cell cycle arrest in early prophase in response to mitotic spindle poisons. Possesses beta-lactamase activity, catalyzing the hydrolysis of penicillin G and nitrocefin. Exhibits no activity towards other beta-lactam antibiotic classes including cephalosporins (cefotaxime) and carbapenems (imipenem). This is DNA cross-link repair 1A protein (DCLRE1A) from Homo sapiens (Human).